The following is a 355-amino-acid chain: Ribosomal RNA large subunit methyltransferase M (355 aa).

Residues serine 183, 216–219 (SPGG), aspartate 235, aspartate 255, and aspartate 271 contribute to the S-adenosyl-L-methionine site. The active-site Proton acceptor is the lysine 300.

Belongs to the class I-like SAM-binding methyltransferase superfamily. RNA methyltransferase RlmE family. RlmM subfamily. In terms of assembly, monomer.

It is found in the cytoplasm. It catalyses the reaction cytidine(2498) in 23S rRNA + S-adenosyl-L-methionine = 2'-O-methylcytidine(2498) in 23S rRNA + S-adenosyl-L-homocysteine + H(+). Functionally, catalyzes the 2'-O-methylation at nucleotide C2498 in 23S rRNA. This is Ribosomal RNA large subunit methyltransferase M from Pseudomonas putida (strain W619).